The sequence spans 496 residues: GTPase Der (496 aa).

2 consecutive EngA-type G domains span residues 3-166 and 208-381; these read PVVA…FDNL and IKLA…RSAT. GTP is bound by residues 9 to 16, 56 to 60, 118 to 121, 214 to 221, 261 to 265, and 326 to 329; these read GRPNVGKS, DTGGI, NKVD, DTAGV, and NKWD. A KH-like domain is found at 382-466; sequence TRVGTSVLTR…PIRIQFQNSD (85 aa).

This sequence belongs to the TRAFAC class TrmE-Era-EngA-EngB-Septin-like GTPase superfamily. EngA (Der) GTPase family. Associates with the 50S ribosomal subunit.

GTPase that plays an essential role in the late steps of ribosome biogenesis. This chain is GTPase Der, found in Vibrio vulnificus (strain YJ016).